A 498-amino-acid chain; its full sequence is Phosphonates import ATP-binding protein PhnC (498 aa).

The interval methionine 1–alanine 27 is disordered. An ABC transporter domain is found at leucine 28–arginine 269. An ATP-binding site is contributed by glycine 60–serine 67. The tract at residues glycine 270 to proline 498 is lysR substrate binding domain.

Belongs to the ABC transporter superfamily. Phosphonates importer (TC 3.A.1.9.1) family. The complex is composed of two ATP-binding proteins (PhnC), two transmembrane proteins (PhnE) and a solute-binding protein (PhnD).

It is found in the cell inner membrane. It carries out the reaction phosphonate(out) + ATP + H2O = phosphonate(in) + ADP + phosphate + H(+). Its function is as follows. Part of the ABC transporter complex PhnCDE involved in phosphonates import. Responsible for energy coupling to the transport system. This Anaeromyxobacter dehalogenans (strain 2CP-C) protein is Phosphonates import ATP-binding protein PhnC.